Consider the following 808-residue polypeptide: Ribosome biogenesis protein BOP1 homolog (808 aa).

A disordered region spans residues 1–56; the sequence is MTSPKGKPSPKRSAPAPTTAALTPRTEERTEGATSSASASASSHISSSFDSPRDDT. 2 stretches are compositionally biased toward low complexity: residues 12-24 and 33-50; these read RSAPAPTTAALTP and ATSSASASASSHISSSFD. WD repeat units follow at residues 430–469, 640–680, 682–720, 724–766, and 777–808; these read GHTATVRSVSVSPNGQYLATGCDDHLVRVFEVQTGRLMKR, KFSE…RRFK, SGGVTTCLSIHPEGDNFLVGDTTSHTSWFDMDFSDKPYK, SHRG…DYNK, and KHQRPVYAVAWHPTLAWLFTSTEDGVVTAWTE.

It belongs to the WD repeat BOP1/ERB1 family.

The protein localises to the nucleus. The protein resides in the nucleolus. Its subcellular location is the nucleoplasm. Its function is as follows. Required for maturation of ribosomal RNAs and formation of the large ribosomal subunit. In Leishmania infantum, this protein is Ribosome biogenesis protein BOP1 homolog.